Here is a 250-residue protein sequence, read N- to C-terminus: 2,3-bisphosphoglycerate-dependent phosphoglycerate mutase (250 aa).

Substrate-binding positions include Arg10–Asn17, Thr23–Gly24, Arg62, Glu89–Tyr92, Lys100, Arg116–Arg117, and Gly185–Asn186. Residue His11 is the Tele-phosphohistidine intermediate of the active site. Glu89 acts as the Proton donor/acceptor in catalysis.

Belongs to the phosphoglycerate mutase family. BPG-dependent PGAM subfamily. Homodimer.

The catalysed reaction is (2R)-2-phosphoglycerate = (2R)-3-phosphoglycerate. It participates in carbohydrate degradation; glycolysis; pyruvate from D-glyceraldehyde 3-phosphate: step 3/5. Catalyzes the interconversion of 2-phosphoglycerate and 3-phosphoglycerate. This Serratia proteamaculans (strain 568) protein is 2,3-bisphosphoglycerate-dependent phosphoglycerate mutase.